Reading from the N-terminus, the 269-residue chain is Formamidopyrimidine-DNA glycosylase (269 aa).

Pro-2 acts as the Schiff-base intermediate with DNA in catalysis. Glu-3 acts as the Proton donor in catalysis. Catalysis depends on Lys-57, which acts as the Proton donor; for beta-elimination activity. DNA is bound by residues His-90, Arg-109, and Lys-150. Residues 235-269 form an FPG-type zinc finger; sequence QVYGRKGEPCRVCGTPIAATKHAQRATFYCRHCQK. Arg-259 (proton donor; for delta-elimination activity) is an active-site residue.

The protein belongs to the FPG family. As to quaternary structure, monomer. Zn(2+) serves as cofactor.

It catalyses the reaction Hydrolysis of DNA containing ring-opened 7-methylguanine residues, releasing 2,6-diamino-4-hydroxy-5-(N-methyl)formamidopyrimidine.. The catalysed reaction is 2'-deoxyribonucleotide-(2'-deoxyribose 5'-phosphate)-2'-deoxyribonucleotide-DNA = a 3'-end 2'-deoxyribonucleotide-(2,3-dehydro-2,3-deoxyribose 5'-phosphate)-DNA + a 5'-end 5'-phospho-2'-deoxyribonucleoside-DNA + H(+). In terms of biological role, involved in base excision repair of DNA damaged by oxidation or by mutagenic agents. Acts as a DNA glycosylase that recognizes and removes damaged bases. Has a preference for oxidized purines, such as 7,8-dihydro-8-oxoguanine (8-oxoG). Has AP (apurinic/apyrimidinic) lyase activity and introduces nicks in the DNA strand. Cleaves the DNA backbone by beta-delta elimination to generate a single-strand break at the site of the removed base with both 3'- and 5'-phosphates. In Salmonella paratyphi B (strain ATCC BAA-1250 / SPB7), this protein is Formamidopyrimidine-DNA glycosylase.